A 399-amino-acid polypeptide reads, in one-letter code: Succinate--CoA ligase [ADP-forming] subunit beta (399 aa).

Residues 9–254 enclose the ATP-grasp domain; it reads KAVLAEFGAP…ESEEDPKEIE (246 aa). ATP is bound by residues K46, 53-55, E109, A112, and E117; that span reads GRG. Mg(2+) contacts are provided by N209 and D223. Substrate-binding positions include N274 and 331 to 333; that span reads GIM.

It belongs to the succinate/malate CoA ligase beta subunit family. In terms of assembly, heterotetramer of two alpha and two beta subunits. Requires Mg(2+) as cofactor.

The catalysed reaction is succinate + ATP + CoA = succinyl-CoA + ADP + phosphate. It carries out the reaction GTP + succinate + CoA = succinyl-CoA + GDP + phosphate. The protein operates within carbohydrate metabolism; tricarboxylic acid cycle; succinate from succinyl-CoA (ligase route): step 1/1. In terms of biological role, succinyl-CoA synthetase functions in the citric acid cycle (TCA), coupling the hydrolysis of succinyl-CoA to the synthesis of either ATP or GTP and thus represents the only step of substrate-level phosphorylation in the TCA. The beta subunit provides nucleotide specificity of the enzyme and binds the substrate succinate, while the binding sites for coenzyme A and phosphate are found in the alpha subunit. This chain is Succinate--CoA ligase [ADP-forming] subunit beta, found in Caulobacter sp. (strain K31).